A 301-amino-acid polypeptide reads, in one-letter code: uncharacterized protein (301 aa).

Catalysis depends on charge relay system residues Ser44 and Tyr107. The active-site Proton donor is the Tyr133. Residue Lys162 is the Schiff-base intermediate with substrate of the active site.

It belongs to the DapA family. In terms of assembly, homotetramer.

The protein localises to the cytoplasm. This is an uncharacterized protein from Pyrobaculum islandicum (strain DSM 4184 / JCM 9189 / GEO3).